The sequence spans 150 residues: Large ribosomal subunit protein bL9 (150 aa).

Belongs to the bacterial ribosomal protein bL9 family.

Its function is as follows. Binds to the 23S rRNA. The protein is Large ribosomal subunit protein bL9 of Shewanella denitrificans (strain OS217 / ATCC BAA-1090 / DSM 15013).